The chain runs to 173 residues: NADH-ubiquinone oxidoreductase chain 6 (173 aa).

The next 4 membrane-spanning stretches (helical) occupy residues 24–44 (AMGL…GMFV), 47–67 (FWFS…LFIY), 81–101 (MKLF…SFFF), and 142–162 (LITL…VKIT).

It belongs to the complex I subunit 6 family.

It is found in the mitochondrion membrane. The catalysed reaction is a ubiquinone + NADH + 5 H(+)(in) = a ubiquinol + NAD(+) + 4 H(+)(out). Its function is as follows. Core subunit of the mitochondrial membrane respiratory chain NADH dehydrogenase (Complex I) that is believed to belong to the minimal assembly required for catalysis. Complex I functions in the transfer of electrons from NADH to the respiratory chain. The immediate electron acceptor for the enzyme is believed to be ubiquinone. The polypeptide is NADH-ubiquinone oxidoreductase chain 6 (Aedes aegypti (Yellowfever mosquito)).